A 204-amino-acid chain; its full sequence is uncharacterized protein (204 aa).

The N-terminal stretch at 1 to 21 (MIKKFLLFAMLNIFLTNKAHS) is a signal peptide.

This is an uncharacterized protein from Borreliella burgdorferi (strain ATCC 35210 / DSM 4680 / CIP 102532 / B31) (Borrelia burgdorferi).